Consider the following 622-residue polypeptide: MALLQIAEPGQSAEPHKHRLAVGIDLGTTNSLVATVRNGIAVCLADEAGRSMLPSIVRYHADGRIEVGQTAAAAHTTDPKNTIMSVKRFMGRGLKDVSHVESTPYDFIDAGGMVRLRTVQGVKTPVEISAEILKTLGARAEASLGGPLTGAVITVPAYFDDAQRQATKDAAKLAGLNVLRLLNEPTAAAVAYGLDNASEGVYAIYDLGGGTFDLSILKLSRGIFEVLATNGDAALGGDDFDHRLFCWILDKAAIEPPTSDDSRRLLMKAREAKELLTASEEAPIRARLSSDEEVNLVVTREEFATMTQHLIAKTMAPMRKVLRDAGLGPEDVKGVVMVGGATRMPHVQRAVAEFFGQEPLTNLDPDKVVALGAAIQANVLAGNRKDEDEWLLLDVIPLSLGLETMGGLTEKVVPRNSTLPIARAQEFTTFKDGQTAMAFHVVQGEREMVKDCRSLARFELRGIPPMVAGAARIRVAFQVDADGLLSVSAREMSSGVEASVLVKPSYGLTDDEIASMLKEGVEHVGDDMHARALREQQVEAERVIEATTHALEQDGALLNADERASIEVAIAELKQLAAGDDPRIVKKGIEALARATDEFAARRMDNSIRSALAGHKVDEIQV.

The protein belongs to the heat shock protein 70 family.

Chaperone involved in the maturation of iron-sulfur cluster-containing proteins. Has a low intrinsic ATPase activity which is markedly stimulated by HscB. This is Chaperone protein HscA homolog from Aromatoleum aromaticum (strain DSM 19018 / LMG 30748 / EbN1) (Azoarcus sp. (strain EbN1)).